The sequence spans 254 residues: E3 ubiquitin-protein ligase NEURL3 (254 aa).

In terms of domain architecture, NHR spans Ala17–Pro174. An RING-type zinc finger spans residues Cys197–Arg236.

In terms of tissue distribution, expressed in alveolar epithelial type II cells.

The protein localises to the cytoplasm. The catalysed reaction is S-ubiquitinyl-[E2 ubiquitin-conjugating enzyme]-L-cysteine + [acceptor protein]-L-lysine = [E2 ubiquitin-conjugating enzyme]-L-cysteine + N(6)-ubiquitinyl-[acceptor protein]-L-lysine.. It participates in protein modification; protein ubiquitination. Its function is as follows. E3 ubiquitin-protein ligase that plays a role in various biological processes such as lung development or innate immunity. Seems to utilize UBE2E1. Promotes innate antiviral response by catalyzing 'Lys-63'-linked ubiquitination of IRF7. Plays an essential role in TLR4-mediated activation of MAPK pathways by promoting 'Lys-48'-linked polyubiquitination of the phosphatase DUSP1/MKP1. The chain is E3 ubiquitin-protein ligase NEURL3 (Neurl3) from Mus musculus (Mouse).